We begin with the raw amino-acid sequence, 381 residues long: Heterogeneous nuclear rnp K-like protein 2 (381 aa).

Positions 1–34 are disordered; that stretch reads MSQFFEAATPVAIPTNNTNGGSSDAGSAATGGAP. Positions 15-33 are enriched in low complexity; it reads TNNTNGGSSDAGSAATGGA. 3 KH domains span residues 43–107, 156–221, and 258–326; these read TINH…IGDI, IGYV…LIEI, and NTRI…ESML. Positions 344-381 are disordered; it reads LEAAEGDATVVTERSDSASFLEEKEEPQKNHDNKEEQS. Phosphoserine is present on residues Ser358, Ser360, and Ser362. The segment covering 369–381 has biased composition (basic and acidic residues); the sequence is EPQKNHDNKEEQS.

It belongs to the HEK2 family. In terms of assembly, binds RNA. In terms of processing, phosphorylated by the plasma membrane-Anchored casein kinase YCK1. Phosphorylation at its C-terminus reduces its RNA-binding capacity.

Its subcellular location is the cytoplasm. The protein resides in the P-body. It is found in the nucleus. The protein localises to the chromosome. It localises to the telomere. Its function is as follows. RNA-binding protein involved in the correct localization of transcripts in the cell. RNA localization is a widespread mechanism for achieving localized protein synthesis. Required for the asymmetric localization to the daughter cell nucleus of the ASH1 transcript, coding for a specific repressor of transcription. Overexpression inhibits translation of the ASH1 transcript. Involved in the stability of transcripts, like the MTL1 mRNA. Involved in structural and functional organization of telomeric chromatin and regulates silencing at the HMR locus. In Saccharomyces cerevisiae (strain JAY291) (Baker's yeast), this protein is Heterogeneous nuclear rnp K-like protein 2 (HEK2).